We begin with the raw amino-acid sequence, 92 residues long: UPF0213 protein MGAS9429_Spy1198 (92 aa).

One can recognise a GIY-YIG domain in the interval 4 to 80; that stretch reads KKAYMYVLEC…KRKTRSQKLA (77 aa).

Belongs to the UPF0213 family.

This chain is UPF0213 protein MGAS9429_Spy1198, found in Streptococcus pyogenes serotype M12 (strain MGAS9429).